A 313-amino-acid polypeptide reads, in one-letter code: Olfactory receptor 51A2 (313 aa).

Topologically, residues 1–27 (MSIINTSYVEITTFFLVGMPGLEYAHI) are extracellular. N-linked (GlcNAc...) asparagine glycosylation occurs at N5. Residues 28–48 (WISIPICSMYLIAILGNGTIL) traverse the membrane as a helical segment. Topologically, residues 49 to 56 (FIIKTEPS) are cytoplasmic. A helical membrane pass occupies residues 57 to 77 (LHGPMYYFLSMLAMSDLGLSL). At 78 to 101 (SSLPTVLSIFLFNAPETSSSACFA) the chain is on the extracellular side. C99 and C191 form a disulfide bridge. A helical transmembrane segment spans residues 102-122 (QEFFIHGFSVLESSVLLIMSF). Residues 123-141 (DRFLAIHNPLRYTSILTTV) are Cytoplasmic-facing. A helical membrane pass occupies residues 142–162 (RVAQIGIVFSFKSMLLVLPFP). At 163–198 (FTLRSLRYCKKNQLSHSYCLHQDVMKLACSDNRIDV) the chain is on the extracellular side. A helical transmembrane segment spans residues 199–218 (IYGFFGALCLMVDFILIAVS). Residues 219-238 (YTLILKTVPGIASKKEELKA) lie on the Cytoplasmic side of the membrane. Residues 239-259 (LNTCVSHICAVIIFYLPIINL) form a helical membrane-spanning segment. Over 260 to 274 (AVVHRFAGHVSPLIN) the chain is Extracellular. Residues 275–295 (VLMANVLLLVPPLMKPIVYCV) form a helical membrane-spanning segment. Topologically, residues 296–313 (KTKQIRVRVVAKLCQWKI) are cytoplasmic.

This sequence belongs to the G-protein coupled receptor 1 family.

It localises to the cell membrane. Odorant receptor. In Homo sapiens (Human), this protein is Olfactory receptor 51A2 (OR51A2).